A 511-amino-acid polypeptide reads, in one-letter code: Apolipoprotein N-acyltransferase (511 aa).

Helical transmembrane passes span 7–29, 58–78, 90–110, 125–145, 163–183, and 192–212; these read PGWPGHLLALAAGALTPLALAPF, GWWYGFGAFGAGTSWIYVSIH, LLMLGFTAGVAFFFALPAWLW, LAFAALWLALELFRSWFLTGF, VPVGGVWLSSFVIALSAALLV, and GASLLLGLVLLLGPWAAGLYL. Residues 230–470 enclose the CN hydrolase domain; that stretch reads IQGNIAQELK…QGILRGEVIP (241 aa). Glutamate 269 acts as the Proton acceptor in catalysis. Lysine 330 is a catalytic residue. Cysteine 382 (nucleophile) is an active-site residue. The helical transmembrane segment at 482–502 threads the bilayer; sequence VWPLAGLAGVLLLWALLGRQL.

Belongs to the CN hydrolase family. Apolipoprotein N-acyltransferase subfamily.

Its subcellular location is the cell inner membrane. It catalyses the reaction N-terminal S-1,2-diacyl-sn-glyceryl-L-cysteinyl-[lipoprotein] + a glycerophospholipid = N-acyl-S-1,2-diacyl-sn-glyceryl-L-cysteinyl-[lipoprotein] + a 2-acyl-sn-glycero-3-phospholipid + H(+). It participates in protein modification; lipoprotein biosynthesis (N-acyl transfer). In terms of biological role, catalyzes the phospholipid dependent N-acylation of the N-terminal cysteine of apolipoprotein, the last step in lipoprotein maturation. The polypeptide is Apolipoprotein N-acyltransferase (Pseudomonas aeruginosa (strain LESB58)).